Here is a 242-residue protein sequence, read N- to C-terminus: MDIKLKDFEGPLDLLLHLVSKYQMDIYDVPITEVIEQYLAYVSTLQAMRLEVTGEYMVMASQLMLIKSRKLLPKVAEVTDLGDDLEQDLLSQIEEYRKFKLLGEHLESKHQERAQYYSKAPTELIYEDAELVHDKTTIDLFLAFSNILAKKKEEFAQNHTTILRDEYKIEDMMIIVKESLIGRDQLRLQDLFKEAQNVQEVITLFLATLELIKTQELILVQEESFGDIYLMEKKEESQVPQS.

Belongs to the ScpA family. In terms of assembly, component of a cohesin-like complex composed of ScpA, ScpB and the Smc homodimer, in which ScpA and ScpB bind to the head domain of Smc. The presence of the three proteins is required for the association of the complex with DNA.

It is found in the cytoplasm. Its function is as follows. Participates in chromosomal partition during cell division. May act via the formation of a condensin-like complex containing Smc and ScpB that pull DNA away from mid-cell into both cell halves. This is Segregation and condensation protein A from Streptococcus pneumoniae (strain Taiwan19F-14).